The following is a 795-amino-acid chain: MKFSEQWVREWVNPAVSTEQLCEQITMLGLEVDGVESVAGTFNGVVVGEVVECAQHPDADKLRVTKVNVGGDRLLDIVCGAANCRQGLKVACATEGAVLPGDFKIKKTKLRGQPSEGMLCSFSELGIDVEADGIIELPLDAPIGTDLREYLALDDNAIEISLTPNRADCLSIAGIAREIGVVNKQLVNQPHFEAVPATISDKVQIDLQAPEACPRYLLRVIKNVNVKAPSPMWMQEKLRRCGIRSIDPIVDITNYILLEFGQPMHAFDAAKVTQPVQVRFAKEGEELVLLDGSTAKLQSNTLLIADQNGPLAMAGIFGGATSGVNSETKDVILESAFFAPLAIAGRARQYGLHTDASHRFERGVDFELARKAMERATTLLLEICGGEAGEICEASSETHLPKVNTVQLRRSKLDALLGHHIETGSVTEIFHRLGFDVTYANDIWTVTSASWRFDIEIEEDLIEEVARIYGYNSIPNNAPLAHLRMREHKESDLDLARIKTALVDADYQEAITYSFVDPKIQSLLHPHKEALVLPNPISVEMSAMRVSLISGLLGAVLYNQNRQQSRVRLFETGLRFVPDANAEFGVRQEFVLSAVITGTAKSEHWAGKAESVDFFDLKGDLESVLSLTEGGNRVRFVAKQFDALHPGQSAAIELDGQEIGFIGAIHPSISQKLGLNGKTFVFEILWNAIAARNVVQAKEISKFPANRRDLALVVADSVPAGELIAACKQAGGEKLVQVNLFDVYQGVGVAEGYKSLAISLTVQDNEKTLEDEEINAVISAVLAEVKQRFNAELRD.

A tRNA-binding domain is found at 39–148; that stretch reads AGTFNGVVVG…LDAPIGTDLR (110 aa). One can recognise a B5 domain in the interval 401-476; sequence PKVNTVQLRR…RIYGYNSIPN (76 aa). Mg(2+) is bound by residues aspartate 454, aspartate 460, glutamate 463, and glutamate 464. In terms of domain architecture, FDX-ACB spans 701–794; sequence SKFPANRRDL…VKQRFNAELR (94 aa).

Belongs to the phenylalanyl-tRNA synthetase beta subunit family. Type 1 subfamily. Tetramer of two alpha and two beta subunits. Mg(2+) is required as a cofactor.

It localises to the cytoplasm. The catalysed reaction is tRNA(Phe) + L-phenylalanine + ATP = L-phenylalanyl-tRNA(Phe) + AMP + diphosphate + H(+). This is Phenylalanine--tRNA ligase beta subunit from Haemophilus influenzae (strain 86-028NP).